We begin with the raw amino-acid sequence, 189 residues long: Interferon alpha-21 (189 aa).

Residues 1–23 (MALSFSLLMAVLVLSYKSICSLG) form the signal peptide. Intrachain disulfides connect C24/C122 and C52/C162.

Belongs to the alpha/beta interferon family.

Its subcellular location is the secreted. Its function is as follows. Produced by macrophages, IFN-alpha have antiviral activities. Interferon stimulates the production of two enzymes: a protein kinase and an oligoadenylate synthetase. The sequence is that of Interferon alpha-21 (IFNA21) from Homo sapiens (Human).